Consider the following 530-residue polypeptide: Apolipoprotein N-acyltransferase (530 aa).

6 consecutive transmembrane segments (helical) span residues 19-39, 65-85, 96-116, 128-148, 169-189, and 197-217; these read LIAG…PGLL, WLAG…AFLV, FAVT…ALLY, LTFA…LTGF, LVGA…PAVW, and AATG…AIAL. Residues 232–485 form the CN hydrolase domain; it reads VQADIKQDLK…SGVIDAQIPG (254 aa). The active-site Proton acceptor is E274. Residue K343 is part of the active site. Residue C396 is the Nucleophile of the active site.

It belongs to the CN hydrolase family. Apolipoprotein N-acyltransferase subfamily.

It is found in the cell inner membrane. The catalysed reaction is N-terminal S-1,2-diacyl-sn-glyceryl-L-cysteinyl-[lipoprotein] + a glycerophospholipid = N-acyl-S-1,2-diacyl-sn-glyceryl-L-cysteinyl-[lipoprotein] + a 2-acyl-sn-glycero-3-phospholipid + H(+). The protein operates within protein modification; lipoprotein biosynthesis (N-acyl transfer). Its function is as follows. Catalyzes the phospholipid dependent N-acylation of the N-terminal cysteine of apolipoprotein, the last step in lipoprotein maturation. In Caulobacter vibrioides (strain ATCC 19089 / CIP 103742 / CB 15) (Caulobacter crescentus), this protein is Apolipoprotein N-acyltransferase.